The primary structure comprises 175 residues: Outer membrane protein assembly factor BamE (175 aa).

The first 21 residues, 1 to 21 (MQNTKLLLTSFTFVGLLALAG), serve as a signal peptide directing secretion. Residue Cys22 is the site of N-palmitoyl cysteine attachment. Residue Cys22 is the site of S-diacylglycerol cysteine attachment. Disordered stretches follow at residues 117-147 (ALLG…KPGS) and 156-175 (IDNV…TSPQ).

Belongs to the BamE family. Part of the Bam complex.

The protein localises to the cell outer membrane. Part of the outer membrane protein assembly complex, which is involved in assembly and insertion of beta-barrel proteins into the outer membrane. May have a structural role in maintaining the cell envelope integrity. The sequence is that of Outer membrane protein assembly factor BamE from Pseudomonas fluorescens.